Consider the following 68-residue polypeptide: DNA-directed RNA polymerase subunit omega (68 aa).

It belongs to the RNA polymerase subunit omega family. The RNAP catalytic core consists of 2 alpha, 1 beta, 1 beta' and 1 omega subunit. When a sigma factor is associated with the core the holoenzyme is formed, which can initiate transcription.

The enzyme catalyses RNA(n) + a ribonucleoside 5'-triphosphate = RNA(n+1) + diphosphate. In terms of biological role, promotes RNA polymerase assembly. Latches the N- and C-terminal regions of the beta' subunit thereby facilitating its interaction with the beta and alpha subunits. The polypeptide is DNA-directed RNA polymerase subunit omega (Citrifermentans bemidjiense (strain ATCC BAA-1014 / DSM 16622 / JCM 12645 / Bem) (Geobacter bemidjiensis)).